A 198-amino-acid polypeptide reads, in one-letter code: HTH-type transcriptional regulator BetI (198 aa).

An HTH tetR-type domain is found at 8-68 (PIRRQQLIDA…ATMRYLISHL (61 aa)). The H-T-H motif DNA-binding region spans 31–50 (TIAQIARRAGVSNGIISHYF).

The protein operates within amine and polyamine biosynthesis; betaine biosynthesis via choline pathway [regulation]. Functionally, repressor involved in the biosynthesis of the osmoprotectant glycine betaine. It represses transcription of the choline transporter BetT and the genes of BetAB involved in the synthesis of glycine betaine. The chain is HTH-type transcriptional regulator BetI from Serratia proteamaculans (strain 568).